Consider the following 137-residue polypeptide: Putative pre-16S rRNA nuclease (137 aa).

The protein belongs to the YqgF nuclease family.

The protein resides in the cytoplasm. Its function is as follows. Could be a nuclease involved in processing of the 5'-end of pre-16S rRNA. This chain is Putative pre-16S rRNA nuclease, found in Bacillus cereus (strain 03BB102).